Reading from the N-terminus, the 56-residue chain is Alpha-pompilidotoxin (56 aa).

The N-terminal stretch at 1–22 (MFKQLILLALAAVFLLINISSA) is a signal peptide. Positions 23–42 (EPAAEPNANAEPLAEASAEP) are excised as a propeptide. Residue leucine 55 is modified to Leucine amide.

In terms of tissue distribution, expressed by the venom gland.

Its subcellular location is the secreted. Functionally, inhibits sodium channels (Nav) inactivation. Shows two types of inhibitory activities on channels. Inhibition of hNav1.6/SCN8A shows a large increase in the steady-state current component without any increase in the slow component, whereas inhibition of hNav1.1/SCN1A, hNav1.2/SCN2A, hNav1.3/SCN3A and hNav1.7/SCN9A shows a large increase in the slow component with only a small steady-state component. Is 5-fold less potent than beta-PMTX for inducing repetitive action potentials in lobster neuromuscular junctions. This chain is Alpha-pompilidotoxin, found in Anoplius samariensis (Solitary wasp).